A 300-amino-acid chain; its full sequence is Geranylgeranyl diphosphate synthase (300 aa).

3 residues coordinate isopentenyl diphosphate: Lys-50, Arg-53, and His-82. The Mg(2+) site is built by Asp-89 and Asp-95. Residue Arg-100 coordinates (2E,6E)-farnesyl diphosphate. Arg-101 contributes to the isopentenyl diphosphate binding site. 3 residues coordinate (2E,6E)-farnesyl diphosphate: Lys-186, Thr-187, and Gln-224.

It belongs to the FPP/GGPP synthase family. It depends on Mg(2+) as a cofactor.

The protein localises to the plastid. It is found in the cyanelle. The enzyme catalyses isopentenyl diphosphate + (2E,6E)-farnesyl diphosphate = (2E,6E,10E)-geranylgeranyl diphosphate + diphosphate. It functions in the pathway isoprenoid biosynthesis; geranylgeranyl diphosphate biosynthesis; geranylgeranyl diphosphate from farnesyl diphosphate and isopentenyl diphosphate: step 1/1. In terms of biological role, catalyzes the condensation of farnesyl diphosphate (FPP) and isopentenyl diphosphate (IPP) to yield geranylgeranyl diphosphate (GGPP) needed for biosynthesis of carotenoids and diterpenes. The sequence is that of Geranylgeranyl diphosphate synthase (crtE) from Cyanophora paradoxa.